A 215-amino-acid chain; its full sequence is Adenylate kinase (215 aa).

Residue 10–15 (GAGKGT) participates in ATP binding. The interval 30-59 (STGDMFRKAIKEETELGKEAKSYMDRGELV) is NMP. AMP-binding positions include Thr-31, Arg-36, 57-59 (ELV), 85-88 (GFPR), and Gln-92. Residues 126 to 163 (GRRICESCGTTYHLVFNPPKVEGICDIDGGKLYQREDD) are LID. Arg-127 serves as a coordination point for ATP. The Zn(2+) site is built by Cys-130 and Cys-133. 136 to 137 (TY) lines the ATP pocket. The Zn(2+) site is built by Cys-150 and Asp-153. Residues Arg-160 and Arg-171 each contribute to the AMP site. An ATP-binding site is contributed by Lys-199.

It belongs to the adenylate kinase family. In terms of assembly, monomer.

It localises to the cytoplasm. The catalysed reaction is AMP + ATP = 2 ADP. The protein operates within purine metabolism; AMP biosynthesis via salvage pathway; AMP from ADP: step 1/1. In terms of biological role, catalyzes the reversible transfer of the terminal phosphate group between ATP and AMP. Plays an important role in cellular energy homeostasis and in adenine nucleotide metabolism. This Staphylococcus aureus (strain COL) protein is Adenylate kinase.